The primary structure comprises 90 residues: MDSKDQTMFYNFGDDSIEEDVKKLMKQVYVALEEKGYNPVNQIVGYLLSGDPAYIPRHKDARSMIRRLERDEIIEELVKAYLKNNEIGEK.

Belongs to the UPF0297 family.

The sequence is that of UPF0297 protein lmo1503 from Listeria monocytogenes serovar 1/2a (strain ATCC BAA-679 / EGD-e).